Here is a 136-residue protein sequence, read N- to C-terminus: WAP four-disulfide core domain protein 6A (136 aa).

The signal sequence occupies residues 1-27 (MRLWGLLPFLVPFILLWSIQEPELAEG). The 46-residue stretch at 28–73 (FFIRTCPRVRVKCEVEERNECTRHRQCPNKKRCCLFSCGKKCMDLR) folds into the WAP domain. Disulfide bonds link Cys33/Cys61, Cys40/Cys65, Cys48/Cys60, Cys54/Cys69, Cys77/Cys127, Cys86/Cys110, and Cys102/Cys123. The region spanning 77–127 (CSLPQDPGPCLAYLPRWWYNQETDLCTEFIYGGCQGNPNNFPSEGICTVVC) is the BPTI/Kunitz inhibitor domain.

It localises to the secreted. This chain is WAP four-disulfide core domain protein 6A (Wfdc6a), found in Mus musculus (Mouse).